The primary structure comprises 803 residues: Palmitoyl thioesterase CPT1C (803 aa).

The Cytoplasmic segment spans residues 1-52 (MAEAHQAVGFRPSLTSDGAEVELSAPVLQEIYLSGLRSWKRHLSRFWNDFLT). Residues 53–75 (GVFPASPLSWLFLFSAIQLAWFL) traverse the membrane as a helical segment. Residues 76–103 (QLDPSLGLMEKIKELLPDWGGQHHGLRG) lie on the Lumenal side of the membrane. The chain crosses the membrane as a helical span at residues 104–126 (VLAAALFASCLWGALIFTLHVAL). The Cytoplasmic portion of the chain corresponds to 127–803 (RLLLSYHGWL…SKASMTSTDF (677 aa)). Residue His470 is the Proton acceptor of the active site. 552–564 (GKSFIRRCHLSSD) is a binding site for CoA. Residues Tyr586, Ser588, and Thr599 each contribute to the (R)-carnitine site. Residues 761-803 (LFQAGQHFKRRFRGSGKENSRHRCGFLSRQTGASKASMTSTDF) are required for interaction with GRIA1. The disordered stretch occupies residues 772–803 (FRGSGKENSRHRCGFLSRQTGASKASMTSTDF). The span at 788–803 (SRQTGASKASMTSTDF) shows a compositional bias: polar residues.

The protein belongs to the carnitine/choline acetyltransferase family. Peripherally associated with AMPAR complex. AMPAR complex consists of an inner core made of 4 pore-forming GluA/GRIA proteins (GRIA1, GRIA2, GRIA3 and GRIA4) and 4 major auxiliary subunits arranged in a twofold symmetry. One of the two pairs of distinct binding sites is occupied either by CNIH2, CNIH3 or CACNG2, CACNG3. The other harbors CACNG2, CACNG3, CACNG4, CACNG8 or GSG1L. This inner core of AMPAR complex is complemented by outer core constituents binding directly to the GluA/GRIA proteins at sites distinct from the interaction sites of the inner core constituents. Outer core constituents include at least PRRT1, PRRT2, CKAMP44/SHISA9, FRRS1L and NRN1. The proteins of the inner and outer core serve as a platform for other, more peripherally associated AMPAR constituents, including CPT1C. Alone or in combination, these auxiliary subunits control the gating and pharmacology of the AMPAR complex and profoundly impact their biogenesis and protein processing. Interacts with SACM1L; the interaction regulates SACM1L phosphatidylinositol-3-phosphatase activity and translocation to endoplasmic reticulum/trans Golgi network in a malonyl-CoA dependent manner. Interacts with ATL1. As to expression, expressed predominantly in brain and testis. Expressed in motor neurons.

Its subcellular location is the cell projection. The protein localises to the dendrite. The protein resides in the axon. It is found in the endoplasmic reticulum membrane. It catalyses the reaction S-hexadecanoyl-L-cysteinyl-[protein] + H2O = L-cysteinyl-[protein] + hexadecanoate + H(+). Its function is as follows. Palmitoyl thioesterase specifically expressed in the endoplasmic reticulum of neurons. Modulates the trafficking of the glutamate receptor, AMPAR, to plasma membrane through depalmitoylation of GRIA1. Also regulates AMPR trafficking through the regulation of SACM1L phosphatidylinositol-3-phosphatase activity by interaction in a malonyl-CoA dependent manner. Binds malonyl-CoA and couples malonyl-CoA to ceramide levels, necessary for proper spine maturation and contributing to systemic energy homeostasis and appetite control. Binds to palmitoyl-CoA, but does not have carnitine palmitoyltransferase 1 catalytic activity or at very low levels. This is Palmitoyl thioesterase CPT1C from Homo sapiens (Human).